Here is a 263-residue protein sequence, read N- to C-terminus: MTDIRLYMLQSGTLKCKVHNIKMNQGNGADYEIPVPFFLITHPGGHTVIDGGNAIEVATDPRGHWGGICDVYWPVLDKDQGCVDQIKALGFDPADVKYVVQSHLHLDHTGAIGRFPNATHIVQRSEYEYAFTPDWFAGGGYIRKDFDKPGLKWQFLNGTQDDYYDVYGDGTLTTIFTPGHAPGHQSLLVRLPNSKPLLLTIDAAYTLDHWEEKALPGFLASTVDTVRSVQKLRTYAEKHDATVVTGHDPDAWANFKKAPEFYA.

Residues histidine 103, histidine 105, aspartate 107, histidine 108, histidine 180, aspartate 202, and histidine 247 each coordinate Zn(2+).

Belongs to the metallo-beta-lactamase superfamily. Zn(2+) serves as cofactor.

The enzyme catalyses an N-acyl-L-homoserine lactone + H2O = an N-acyl-L-homoserine + H(+). The chain is N-acyl homoserine lactonase AttM (attM) from Rhizobium radiobacter (Agrobacterium tumefaciens).